A 353-amino-acid chain; its full sequence is Probable D-xylulose reductase A (353 aa).

Cys-42, His-67, and Glu-68 together coordinate Zn(2+). 177–182 contacts NAD(+); the sequence is GAGPVG.

The protein belongs to the zinc-containing alcohol dehydrogenase family. It depends on Zn(2+) as a cofactor.

The catalysed reaction is xylitol + NAD(+) = D-xylulose + NADH + H(+). It functions in the pathway carbohydrate degradation; L-arabinose degradation via L-arabinitol; D-xylulose 5-phosphate from L-arabinose (fungal route): step 4/5. Its function is as follows. Xylitol dehydrogenase which catalyzes the conversion of xylitol to D-xylulose. Xylose is a major component of hemicelluloses such as xylan. Most fungi utilize D-xylose via three enzymatic reactions, xylose reductase (XR), xylitol dehydrogenase (XDH), and xylulokinase, to form xylulose 5-phosphate, which enters pentose phosphate pathway. This Aspergillus terreus (strain NIH 2624 / FGSC A1156) protein is Probable D-xylulose reductase A (xdhA).